Here is a 230-residue protein sequence, read N- to C-terminus: Fibrillarin-like rRNA/tRNA 2'-O-methyltransferase (230 aa).

S-adenosyl-L-methionine is bound by residues 87–88, 105–106, 130–131, and 150–153; these read TT, EF, DA, and DVAQ.

Belongs to the methyltransferase superfamily. Fibrillarin family. Interacts with nop5. Component of box C/D small ribonucleoprotein (sRNP) particles that contain rpl7ae, FlpA and nop5, plus a guide RNA.

In terms of biological role, involved in pre-rRNA and tRNA processing. Utilizes the methyl donor S-adenosyl-L-methionine to catalyze the site-specific 2'-hydroxyl methylation of ribose moieties in rRNA and tRNA. Site specificity is provided by a guide RNA that base pairs with the substrate. Methylation occurs at a characteristic distance from the sequence involved in base pairing with the guide RNA. This Methanococcus maripaludis (strain DSM 14266 / JCM 13030 / NBRC 101832 / S2 / LL) protein is Fibrillarin-like rRNA/tRNA 2'-O-methyltransferase.